Here is a 59-residue protein sequence, read N- to C-terminus: Small ribosomal subunit protein bS21 (59 aa).

The interval 27 to 59 (GLMAEMRKREHYEKPSVRRKKKAQARNKKKRYA) is disordered. Residues 31 to 42 (EMRKREHYEKPS) are compositionally biased toward basic and acidic residues. Basic residues predominate over residues 43–59 (VRRKKKAQARNKKKRYA).

The protein belongs to the bacterial ribosomal protein bS21 family.

The sequence is that of Small ribosomal subunit protein bS21 from Carboxydothermus hydrogenoformans (strain ATCC BAA-161 / DSM 6008 / Z-2901).